A 289-amino-acid polypeptide reads, in one-letter code: NAC domain-containing protein 2 (289 aa).

An NAC domain is found at 7-158 (LPPGFRFHPT…DWVLCRIYNK (152 aa)).

In terms of assembly, interacts with KIN10 and KIN11.

It localises to the nucleus. This Arabidopsis thaliana (Mouse-ear cress) protein is NAC domain-containing protein 2 (NAC002).